A 66-amino-acid polypeptide reads, in one-letter code: Hirudin-PA (66 aa).

The interaction with thrombin active site stretch occupies residues 1-3; the sequence is ITY. Cystine bridges form between cysteine 6–cysteine 14, cysteine 16–cysteine 28, and cysteine 22–cysteine 39. The disordered stretch occupies residues 39–66; it reads CVTGEGTPKPQSHNQGDFEPIPEDAYDE. Threonine 45 carries an O-linked (GalNAc...) threonine glycan. The tract at residues 55–66 is interaction with fibrinogen-binding exosite of thrombin; the sequence is DFEPIPEDAYDE. Sulfotyrosine is present on tyrosine 64.

It belongs to the protease inhibitor I14 (hirudin) family.

It is found in the secreted. Hirudin is a potent thrombin-specific protease inhibitor. It forms a stable non-covalent complex with alpha-thrombin, thereby abolishing its ability to cleave fibrinogen. This Hirudo medicinalis (Medicinal leech) protein is Hirudin-PA.